The primary structure comprises 122 residues: Large ribosomal subunit protein uL14c (122 aa).

This sequence belongs to the universal ribosomal protein uL14 family. As to quaternary structure, part of the 50S ribosomal subunit.

It localises to the plastid. The protein resides in the chloroplast. In terms of biological role, binds to 23S rRNA. The chain is Large ribosomal subunit protein uL14c from Glycine max (Soybean).